Reading from the N-terminus, the 239-residue chain is 1-(5-phosphoribosyl)-5-[(5-phosphoribosylamino)methylideneamino] imidazole-4-carboxamide isomerase (239 aa).

The active-site Proton acceptor is the aspartate 8. Residue aspartate 129 is the Proton donor of the active site.

Belongs to the HisA/HisF family.

The protein localises to the cytoplasm. The enzyme catalyses 1-(5-phospho-beta-D-ribosyl)-5-[(5-phospho-beta-D-ribosylamino)methylideneamino]imidazole-4-carboxamide = 5-[(5-phospho-1-deoxy-D-ribulos-1-ylimino)methylamino]-1-(5-phospho-beta-D-ribosyl)imidazole-4-carboxamide. It functions in the pathway amino-acid biosynthesis; L-histidine biosynthesis; L-histidine from 5-phospho-alpha-D-ribose 1-diphosphate: step 4/9. This chain is 1-(5-phosphoribosyl)-5-[(5-phosphoribosylamino)methylideneamino] imidazole-4-carboxamide isomerase, found in Bacillus cereus (strain AH187).